Here is a 192-residue protein sequence, read N- to C-terminus: Anthranilate synthase component 2 (192 aa).

A Glutamine amidotransferase type-1 domain is found at 1–192 (MIVLVNNRDS…KNFVEMSRNG (192 aa)). Residue 50-52 (GPG) participates in L-glutamine binding. Catalysis depends on Cys-78, which acts as the Nucleophile; for GATase activity. L-glutamine is bound by residues Gln-82 and 127–128 (SL). Active-site for GATase activity residues include His-165 and Glu-167.

As to quaternary structure, heterotetramer consisting of two non-identical subunits: a beta subunit (TrpG) and a large alpha subunit (TrpE).

It catalyses the reaction chorismate + L-glutamine = anthranilate + pyruvate + L-glutamate + H(+). Its pathway is amino-acid biosynthesis; L-tryptophan biosynthesis; L-tryptophan from chorismate: step 1/5. Its function is as follows. Part of a heterotetrameric complex that catalyzes the two-step biosynthesis of anthranilate, an intermediate in the biosynthesis of L-tryptophan. In the first step, the glutamine-binding beta subunit (TrpG) of anthranilate synthase (AS) provides the glutamine amidotransferase activity which generates ammonia as a substrate that, along with chorismate, is used in the second step, catalyzed by the large alpha subunit of AS (TrpE) to produce anthranilate. In the absence of TrpG, TrpE can synthesize anthranilate directly from chorismate and high concentrations of ammonia. This is Anthranilate synthase component 2 (trpG) from Thermococcus kodakarensis (strain ATCC BAA-918 / JCM 12380 / KOD1) (Pyrococcus kodakaraensis (strain KOD1)).